Consider the following 504-residue polypeptide: ATP synthase subunit alpha (504 aa).

Gly169–Thr176 serves as a coordination point for ATP.

This sequence belongs to the ATPase alpha/beta chains family. As to quaternary structure, F-type ATPases have 2 components, CF(1) - the catalytic core - and CF(0) - the membrane proton channel. CF(1) has five subunits: alpha(3), beta(3), gamma(1), delta(1), epsilon(1). CF(0) has three main subunits: a(1), b(2) and c(9-12). The alpha and beta chains form an alternating ring which encloses part of the gamma chain. CF(1) is attached to CF(0) by a central stalk formed by the gamma and epsilon chains, while a peripheral stalk is formed by the delta and b chains.

The protein localises to the cell membrane. It catalyses the reaction ATP + H2O + 4 H(+)(in) = ADP + phosphate + 5 H(+)(out). Produces ATP from ADP in the presence of a proton gradient across the membrane. The alpha chain is a regulatory subunit. This Clostridium botulinum (strain Loch Maree / Type A3) protein is ATP synthase subunit alpha.